Here is a 1928-residue protein sequence, read N- to C-terminus: Lactase/phlorizin hydrolase (1928 aa).

The signal sequence occupies residues 1–21 (MELPWTALFLSTVLLGLSCQG). The propeptide at 22–867 (SDWESDRNFI…LPVRADFTSR (846 aa)) is XBetaGly. Over 22–1883 (SDWESDRNFI…LMLGIAEAQT (1862 aa)) the chain is Extracellular. The tract at residues 46–289 (NYPPGKQGSD…FIYTLKLEDC (244 aa)) is glycosyl hydrolase-1 1; Region I. The tract at residues 364 to 856 (VWAAFANQSR…GFSAKKVKRN (493 aa)) is glycosyl hydrolase-1 2; Region II. N-linked (GlcNAc...) asparagine glycans are attached at residues asparagine 370, asparagine 514, asparagine 824, asparagine 936, asparagine 948, asparagine 991, and asparagine 1037. The interval 904-1367 (RFRDDFLWGV…DLIANNGMPL (464 aa)) is glycosyl hydrolase-1 3; Region III. Phlorizin hydrolase/Glycosylceramidase activity. The active-site Proton donor; for phlorizin hydrolase/Glycosylceramidase activity is the glutamate 1067. Asparagine 1176 and asparagine 1240 each carry an N-linked (GlcNAc...) asparagine glycan. Residue glutamate 1274 is the Nucleophile; for phlorizin hydrolase/Glycosylceramidase activity of the active site. 2 N-linked (GlcNAc...) asparagine glycosylation sites follow: asparagine 1281 and asparagine 1509. Residues 1374–1847 (LYGEFPKGFI…CNGFPDPAQG (474 aa)) are glycosyl hydrolase-1 4; Region IV. Lactase activity. The active-site Proton donor; for lactase activity is glutamate 1539. N-linked (GlcNAc...) asparagine glycans are attached at residues asparagine 1657 and asparagine 1684. The active-site Nucleophile; for lactase activity is glutamate 1750. N-linked (GlcNAc...) asparagine glycosylation is found at asparagine 1762 and asparagine 1815. Residues 1884-1902 (ALYVLFALLLLGACSLAFL) traverse the membrane as a helical segment. Over 1903–1928 (TYNTGRRSKQGNAQPSQHQLSPISSF) the chain is Cytoplasmic.

It belongs to the glycosyl hydrolase 1 family. Homodimer. Post-translationally, N-glycosylated. Intestine.

Its subcellular location is the apical cell membrane. It catalyses the reaction lactose + H2O = beta-D-galactose + D-glucose. The enzyme catalyses phlorizin + H2O = phloretin + beta-D-glucose. It carries out the reaction D-cellobiose + H2O = beta-D-glucose + D-glucose. The catalysed reaction is quercetin 4'-O-beta-D-glucoside + H2O = quercetin + beta-D-glucose. It catalyses the reaction quercetin 3-O-beta-D-glucoside + H2O = quercetin + beta-D-glucose. The enzyme catalyses kaempferol 3-O-beta-D-glucoside + H2O = kaempferol + beta-D-glucose. It carries out the reaction luteolin 7-O-beta-D-glucoside + H2O = luteolin + beta-D-glucose. The catalysed reaction is luteolin 4'-O-beta-D-glucoside + H2O = luteolin + beta-D-glucose. It catalyses the reaction (2S)-naringenin 7-O-beta-D-glucoside + H2O = (2S)-naringenin + beta-D-glucose. The enzyme catalyses eriodictyol-7-O-beta-D-glucoside + H2O = (S)-eriodictyol + beta-D-glucose. It carries out the reaction apigenin 7-O-beta-D-glucoside + H2O = apigenin + beta-D-glucose. The catalysed reaction is daidzein 7-O-beta-D-glucoside + H2O = daidzein + beta-D-glucose + H(+). It catalyses the reaction genistein 7-O-beta-D-glucoside + H2O = genistein + beta-D-glucose. The enzyme catalyses a beta-D-galactosyl-N-acylsphingosine + H2O = a ceramide + beta-D-galactose.. It carries out the reaction beta-D-glucosyl-(1&lt;-&gt;1')-N-hexadecanoylsphing-4-enine + H2O = N-hexadecanoylsphing-4-enine + beta-D-glucose. The catalysed reaction is beta-D-galactosyl-(1&lt;-&gt;1')-N-hexadecanoylsphing-4-enine + H2O = beta-D-galactose + N-hexadecanoylsphing-4-enine. It catalyses the reaction beta-D-galactosyl-(1&lt;-&gt;1')-N-hexadecanoylsphinganine + H2O = N-hexadecanoylsphinganine + beta-D-galactose. The enzyme catalyses beta-D-glucosyl-(1&lt;-&gt;1')-N-hexadecanoylsphinganine + H2O = N-hexadecanoylsphinganine + beta-D-glucose. In terms of biological role, broad specificity glycosidase of the intestinal brush border membrane that hydrolyzes lactose, the main sugar in mammalian milk, to produce D-glucose and D-galactose. The mature protein is composed of two domains that catalyze the hydrolysis of beta-glucopyranosides and beta-galactopyranosides, with a preference for hydrophilic aglycones (in lactose and cellobiose) for one domain and hydrophobic aglycones (in phlorizin and glycosylceramides) for the other. The protein is Lactase/phlorizin hydrolase of Rattus norvegicus (Rat).